The sequence spans 757 residues: Protein ALTERED SEED GERMINATION 2 (757 aa).

WD repeat units lie at residues 6 to 43 (FHDG…LSQE), 48 to 87 (GHQG…LLHS), 91 to 132 (GHTA…GRAE), 145 to 185 (CHTR…SCPP), 213 to 253 (KQTL…PLAS), and 277 to 316 (RTNL…CSTG). The short motif at 245 to 257 (RRMLPPLASSRKR) is the Nuclear localization signal element. The stretch at 442–475 (FKAHYYMSEALQQLGKCKEALDFATAAQHMNPSD) is one TPR repeat. Residues 519–601 (ANSDSSHDMS…SSSQNDRTSY (83 aa)) are disordered. The segment covering 523–532 (SSHDMSRSER) has biased composition (basic and acidic residues). Acidic residues predominate over residues 533-543 (EDSDYDEELEL). Over residues 582 to 601 (TVDNASSGTASSSQNDRTSY) the composition is skewed to polar residues. 2 WD repeats span residues 618–658 (NVGT…LMKV) and 661–700 (GDES…PSIV). A lipid anchor (S-12-hydroxyfarnesyl cysteine; by FTB/ERA1) is attached at C754.

As to quaternary structure, interacts with DDB1; the subcellular localization of this complex depends on farnesylation status. Binds to HDA9 in the cytosol when farnesylated. In terms of processing, farnesylated at Cys-754 by FTB/ERA1; this modification triggers an exclusion from the nucleus.

It localises to the nucleus. The protein localises to the cytoplasm. The protein resides in the cytosol. Its pathway is protein modification; protein ubiquitination. In terms of biological role, may function as a substrate adapter for CUL4-DDB1 E3 ubiquitin-protein ligase complex. Negative regulator of fatty acid biosynthetic process and accumulation. Acts as an abscisic acid (ABA) negative regulator. Involved in responses to salt (NaCl) and osmotic (e.g. in response to mannitol and PEG) stresses. The polypeptide is Protein ALTERED SEED GERMINATION 2 (Arabidopsis thaliana (Mouse-ear cress)).